Consider the following 268-residue polypeptide: NAC transcription factor 29 (268 aa).

The region spanning 9–161 (LPPGFRFHPT…EWVLCRIYKK (153 aa)) is the NAC domain. Residues 106-167 (VGVKKALVFY…IYKKRGASKL (62 aa)) mediate DNA binding.

Expressed in senescing leaves, petals and sepals.

The protein localises to the nucleus. Its function is as follows. Transcription activator that binds to, and transactivates the promoter of the abscisic aldehyde oxidase AAO3. Promotes chlorophyll degradation in leaves by enhancing transcription of AAO3, which leads to increased levels of the senescence-inducing hormone abscisic acid (ABA). Involved in the control of dehydration in senescing leaves. Binds to the DNA sequence 5'-CACGTAAGT-3' of SAG113 promoter. SAG113 acts as a negative regulator of ABA signaling for stomatal closure in leaves, and controls water loss during leaf senescence. Transcription factor of the NAC family involved in senescence. May function in the transition between active cell division and cell expansion. Required for normal seed development and morphology. The sequence is that of NAC transcription factor 29 (NAC029) from Arabidopsis thaliana (Mouse-ear cress).